A 68-amino-acid chain; its full sequence is DNA-directed RNA polymerase subunit omega (68 aa).

The protein belongs to the RNA polymerase subunit omega family. The RNAP catalytic core consists of 2 alpha, 1 beta, 1 beta' and 1 omega subunit. When a sigma factor is associated with the core the holoenzyme is formed, which can initiate transcription.

The catalysed reaction is RNA(n) + a ribonucleoside 5'-triphosphate = RNA(n+1) + diphosphate. Promotes RNA polymerase assembly. Latches the N- and C-terminal regions of the beta' subunit thereby facilitating its interaction with the beta and alpha subunits. The polypeptide is DNA-directed RNA polymerase subunit omega (Neisseria gonorrhoeae (strain NCCP11945)).